Reading from the N-terminus, the 31-residue chain is NRLCCSQYGFCGTTSEYCSRANGCQSNCWGR.

The Chitin-binding type-1 domain occupies 1–30 (NRLCCSQYGFCGTTSEYCSRANGCQSNCWG). Disulfide bonds link Cys4–Cys18 and Cys24–Cys28.

Seeds (at protein level).

In terms of biological role, chitin-binding protein which functions in defense against chitin-containing fungal pathogens. The sequence is that of Morintide mO3 from Moringa oleifera (Horseradish tree).